Here is a 495-residue protein sequence, read N- to C-terminus: MASPGNHAIVAPGWTRSEDGSLTRPLDLVENWLLARIQRANTPPGREAEGLTYKLKLRLPQDIDDPIPYLRRAWLVFRYVQPLIGAIYPPYSERDETGRYLVTVPLMDPEEWLRLSFHVNQGTQAVFRDVDDAGKIFQPRPTAMAYWFPPSSTLIIRSTHLRFDAVGIYKATNTFMLGLESVFRLGLDANLDCYTTDVKQPSLPPGIDYILGFPPQETPVPHRVERAVDELMRHWHHGLYSLSLPVREGSEDAAPANTQHLVTLFDEPTLEAIVAGCKKLGVSVSAAVHASIVRVWASFPQQQHTGARNMLIPLVANLRPLLDPKWVVPDYALGLCIFVVPFCLTGGFEDLTQRLGAVYSRDLSALPSDPAGDPVSFLELLPLYESREAAFLGSLPVAGCPPFRVPNLSSLGVLERYLARAYGKKGAQAPVCEIEDVALVNATTDPTIEFQLFTFRGTMRLYLYYNDAYYTEDFLAPVMEMVRDSLLQELGLGGS.

The protein localises to the nucleus. Its function is as follows. Transcriptional regulator that may regulate the expression of the loline biosynthesis cluster 1, one of the 2 clusters involved in the biosynthesis of loline alkaloids, potent insecticidal agents composed of a pyrrolizidine ring system and an uncommon ether bridge linking carbons 2 and 7. This Epichloe uncinata (Endophyte fungus) protein is Loline biosynthesis cluster 1 transcription factor lolU1.